The following is a 2540-amino-acid chain: Probable JmjC domain-containing histone demethylation protein 2C (2540 aa).

Residues 278–309 show a composition bias toward polar residues; sequence TRAQANSPRPAMNSQAAVPKQNTHQQQQQRSI. The segment at 278–478 is disordered; sequence TRAQANSPRP…TVSDHNSNDL (201 aa). 2 positions are modified to phosphoserine: serine 317 and serine 320. Over residues 323–342 the composition is skewed to basic and acidic residues; it reads DEEKMKEEKYDYISRGENPK. Over residues 343 to 353 the composition is skewed to basic residues; it reads GKNKHLMNKRR. Residues 354 to 371 are compositionally biased toward basic and acidic residues; it reads KPEEDEKKLNMKRLRTDN. 2 positions are modified to phosphoserine: serine 373 and serine 376. A compositionally biased stretch (low complexity) spans 373 to 382; the sequence is SDFSESSDSE. Basic and acidic residues-rich tracts occupy residues 383 to 403, 410 to 427, and 438 to 452; these read NSNKRIIDNSSEQKPENELKN, NGEEGKPHNNEKAGEETL, and QEDKKHEEAEKRKSV. A compositionally biased stretch (polar residues) spans 464 to 478; sequence SSEQSTVSDHNSNDL. Phosphoserine is present on residues serine 475 and serine 501. Phosphothreonine is present on threonine 505. Phosphoserine is present on residues serine 601, serine 617, serine 638, serine 639, serine 641, serine 652, and serine 943. The disordered stretch occupies residues 631–656; it reads VDTHKIKSSPSPEVVKPKITHSPDSV. Disordered stretches follow at residues 1242–1263 and 1614–1692; these read GKVQESQKPPTLIPEPKDSQAN and NRRK…NSNT. Over residues 1643–1652 the composition is skewed to basic residues; it reads KRQPKPTYKK. Residues 1653–1669 are compositionally biased toward basic and acidic residues; that stretch reads KQNDLQKRKGEIEEDLK. A C6-type zinc finger spans residues 1846 to 1871; sequence CDACEATLFNIHWVCQKCGFVVCLDC. Positions 1971-1991 are enriched in polar residues; the sequence is PESQQQNTPPKSEKNGGSSPE. Residues 1971 to 2064 are disordered; the sequence is PESQQQNTPP…LVSQNNEQGS (94 aa). Serine 1989 is subject to Phosphoserine. Over residues 2016 to 2043 the composition is skewed to basic and acidic residues; that stretch reads AEQKAREEKKENKELTLENQIKEEREQD. Residues 2045–2064 show a composition bias toward polar residues; that stretch reads SESPNGRTSPLVSQNNEQGS. Residues 2066–2070 carry the LXXLL motif motif; it reads LRDLL. Glycyl lysine isopeptide (Lys-Gly) (interchain with G-Cter in SUMO2) cross-links involve residues lysine 2132 and lysine 2136. Residues 2274 to 2498 form the JmjC domain; it reads MPARYEDLLK…ESFHLTQELR (225 aa). 3 residues coordinate Fe cation: histidine 2336, glutamate 2338, and histidine 2466.

The protein belongs to the JHDM2 histone demethylase family. Interacts specifically with the ligand-binding domain of the thyroid receptor (TR). Requires the presence of thyroid hormone for its interaction. The cofactor is Fe(2+).

Its subcellular location is the nucleus. Its function is as follows. Probable histone demethylase that specifically demethylates 'Lys-9' of histone H3, thereby playing a central role in histone code. Demethylation of Lys residue generates formaldehyde and succinate. May be involved in hormone-dependent transcriptional activation, by participating in recruitment to androgen-receptor target genes. The chain is Probable JmjC domain-containing histone demethylation protein 2C (JMJD1C) from Homo sapiens (Human).